We begin with the raw amino-acid sequence, 878 residues long: Phosphoenolpyruvate carboxylase (878 aa).

Residues H137 and K545 contribute to the active site.

The protein belongs to the PEPCase type 1 family. It depends on Mg(2+) as a cofactor.

The catalysed reaction is oxaloacetate + phosphate = phosphoenolpyruvate + hydrogencarbonate. Forms oxaloacetate, a four-carbon dicarboxylic acid source for the tricarboxylic acid cycle. The chain is Phosphoenolpyruvate carboxylase from Serratia proteamaculans (strain 568).